We begin with the raw amino-acid sequence, 142 residues long: COA8 family protein Y39B6A.34, mitochondrial (142 aa).

This sequence belongs to the COA8 family.

The protein localises to the mitochondrion inner membrane. Its function is as follows. May be required for cytochrome c complex (COX) assembly and function, COX being the terminal component of the mitochondrial respiratory chain. The protein is COA8 family protein Y39B6A.34, mitochondrial of Caenorhabditis elegans.